The sequence spans 116 residues: Large ribosomal subunit protein bL17 (116 aa).

It belongs to the bacterial ribosomal protein bL17 family. Part of the 50S ribosomal subunit. Contacts protein L32.

The polypeptide is Large ribosomal subunit protein bL17 (Deinococcus geothermalis (strain DSM 11300 / CIP 105573 / AG-3a)).